The chain runs to 252 residues: 3-dehydroquinate dehydratase (252 aa).

3-dehydroquinate-binding positions include serine 21, glutamate 46–arginine 48, and arginine 82. Catalysis depends on histidine 143, which acts as the Proton donor/acceptor. Lysine 170 acts as the Schiff-base intermediate with substrate in catalysis. 3-dehydroquinate-binding residues include arginine 213, serine 232, and glutamine 236.

It belongs to the type-I 3-dehydroquinase family. In terms of assembly, homodimer.

It carries out the reaction 3-dehydroquinate = 3-dehydroshikimate + H2O. It participates in metabolic intermediate biosynthesis; chorismate biosynthesis; chorismate from D-erythrose 4-phosphate and phosphoenolpyruvate: step 3/7. Its function is as follows. Involved in the third step of the chorismate pathway, which leads to the biosynthesis of aromatic amino acids. Catalyzes the cis-dehydration of 3-dehydroquinate (DHQ) and introduces the first double bond of the aromatic ring to yield 3-dehydroshikimate. The protein is 3-dehydroquinate dehydratase of Salmonella paratyphi A (strain ATCC 9150 / SARB42).